The chain runs to 598 residues: NADPH-dependent diflavin oxidoreductase 1 (598 aa).

The region spanning 6 to 150 (LLVLFGSQTG…AIDPWVGDLW (145 aa)) is the Flavodoxin-like domain. FMN contacts are provided by residues 12 to 17 (SQTGTA), 59 to 62 (ATTG), 97 to 106 (LGDSSYAKFN), and Asp132. Positions 206-448 (LQPFLAPVIT…VRPGSLVFPK (243 aa)) constitute an FAD-binding FR-type domain. Residues Arg350, 382–385 (RAFS), and 416–419 (GLCS) each bind FAD. NADP(+) contacts are provided by residues Thr461, 516–517 (SR), 522–526 (KVYVQ), and Asp559. Trp597 contributes to the FAD binding site.

This sequence belongs to the NADPH-dependent diflavin oxidoreductase NDOR1 family. In the N-terminal section; belongs to the flavodoxin family. It in the C-terminal section; belongs to the flavoprotein pyridine nucleotide cytochrome reductase family. In terms of assembly, interacts with CIAPIN1; as part of the cytosolic iron-sulfur (Fe-S) protein assembly (CIA) machinery. Interacts with DCPS. FAD serves as cofactor. Requires FMN as cofactor.

It is found in the cytoplasm. The protein localises to the perinuclear region. It carries out the reaction 2 oxidized [2Fe-2S]-[protein] + NADPH = 2 reduced [2Fe-2S]-[protein] + NADP(+) + H(+). In terms of biological role, NADPH-dependent reductase which is a central component of the cytosolic iron-sulfur (Fe-S) protein assembly (CIA) machinery. Transfers electrons from NADPH via its FAD and FMN prosthetic groups to the [2Fe-2S] cluster of CIAPIN1, another key component of the CIA machinery. In turn, this reduced cluster provides electrons for assembly of cytosolic iron-sulfur cluster proteins. It can also reduce the [2Fe-2S] cluster of CISD1 and activate this protein implicated in Fe/S cluster repair. In vitro can fully activate methionine synthase/MTR in the presence of soluble cytochrome b5/CYB5A. This chain is NADPH-dependent diflavin oxidoreductase 1, found in Mus musculus (Mouse).